Reading from the N-terminus, the 243-residue chain is Ubiquinone/menaquinone biosynthesis C-methyltransferase UbiE (243 aa).

Residues threonine 69, aspartate 90, and 116–117 contribute to the S-adenosyl-L-methionine site; that span reads DA.

The protein belongs to the class I-like SAM-binding methyltransferase superfamily. MenG/UbiE family.

It catalyses the reaction a 2-demethylmenaquinol + S-adenosyl-L-methionine = a menaquinol + S-adenosyl-L-homocysteine + H(+). The catalysed reaction is a 2-methoxy-6-(all-trans-polyprenyl)benzene-1,4-diol + S-adenosyl-L-methionine = a 5-methoxy-2-methyl-3-(all-trans-polyprenyl)benzene-1,4-diol + S-adenosyl-L-homocysteine + H(+). The protein operates within quinol/quinone metabolism; menaquinone biosynthesis; menaquinol from 1,4-dihydroxy-2-naphthoate: step 2/2. It participates in cofactor biosynthesis; ubiquinone biosynthesis. Functionally, methyltransferase required for the conversion of demethylmenaquinol (DMKH2) to menaquinol (MKH2) and the conversion of 2-polyprenyl-6-methoxy-1,4-benzoquinol (DDMQH2) to 2-polyprenyl-3-methyl-6-methoxy-1,4-benzoquinol (DMQH2). The polypeptide is Ubiquinone/menaquinone biosynthesis C-methyltransferase UbiE (Ralstonia pickettii (strain 12J)).